The primary structure comprises 568 residues: Pyruvate carboxylase subunit B (568 aa).

The Pyruvate carboxyltransferase domain maps to 4–264 (IKVVETAFRD…DTGLDLEILK (261 aa)). Substrate is bound by residues 12–16 (RDAHQ) and arginine 83. Aspartate 13 serves as a coordination point for a divalent metal cation. 3 residues coordinate a divalent metal cation: lysine 174, histidine 203, and histidine 205. Lysine 174 is modified (N6-carboxylysine). Threonine 339 serves as a coordination point for substrate. In terms of domain architecture, Biotinyl-binding spans 493-568 (PEPVDVEGAV…ETGDIIMVIK (76 aa)). The residue at position 534 (lysine 534) is an N6-biotinyllysine.

Heterooctamer of four A and four B subunits. It depends on Mg(2+) as a cofactor. Requires Mn(2+) as cofactor. Co(2+) is required as a cofactor.

The enzyme catalyses hydrogencarbonate + pyruvate + ATP = oxaloacetate + ADP + phosphate + H(+). Its activity is regulated as follows. Inhibited by ADP and alpha-ketoglutarate. Functionally, pyruvate carboxylase catalyzes a 2-step reaction, involving the ATP-dependent carboxylation of the covalently attached biotin in the first step and the transfer of the carboxyl group to pyruvate in the second. This is Pyruvate carboxylase subunit B (pycB) from Methanothermobacter thermautotrophicus (strain ATCC 29096 / DSM 1053 / JCM 10044 / NBRC 100330 / Delta H) (Methanobacterium thermoautotrophicum).